A 218-amino-acid chain; its full sequence is Methylthioribulose-1-phosphate dehydratase (218 aa).

His107 and His109 together coordinate Zn(2+).

It belongs to the aldolase class II family. MtnB subfamily. The cofactor is Zn(2+).

It carries out the reaction 5-(methylsulfanyl)-D-ribulose 1-phosphate = 5-methylsulfanyl-2,3-dioxopentyl phosphate + H2O. It functions in the pathway amino-acid biosynthesis; L-methionine biosynthesis via salvage pathway; L-methionine from S-methyl-5-thio-alpha-D-ribose 1-phosphate: step 2/6. Functionally, catalyzes the dehydration of methylthioribulose-1-phosphate (MTRu-1-P) into 2,3-diketo-5-methylthiopentyl-1-phosphate (DK-MTP-1-P). The sequence is that of Methylthioribulose-1-phosphate dehydratase from Xylella fastidiosa (strain Temecula1 / ATCC 700964).